Here is a 30-residue protein sequence, read N- to C-terminus: Basic phospholipase A2 CM-I (30 aa).

Belongs to the phospholipase A2 family. Group I subfamily. It depends on Ca(2+) as a cofactor. As to expression, expressed by the venom gland.

Its subcellular location is the secreted. The enzyme catalyses a 1,2-diacyl-sn-glycero-3-phosphocholine + H2O = a 1-acyl-sn-glycero-3-phosphocholine + a fatty acid + H(+). Snake venom phospholipase A2 (PLA2) that shows weak anticoagulant activity. Is more catalytically active than the strong anticoagulant protein CM-IV found in this venom. Acts by inhibiting the complex composed of tissue factor (F3) and coagulation factor VIIa (F7) (TF-VIIa complex) by only enzymatic mechanism. PLA2 catalyzes the calcium-dependent hydrolysis of the 2-acyl groups in 3-sn-phosphoglycerides. In Naja nigricollis (Black-necked spitting cobra), this protein is Basic phospholipase A2 CM-I.